We begin with the raw amino-acid sequence, 275 residues long: ADP-dependent (S)-NAD(P)H-hydrate dehydratase (275 aa).

The 269-residue stretch at 5–273 (TDEILAKVIK…EEIPLFMKKY (269 aa)) folds into the YjeF C-terminal domain. (6S)-NADPHX-binding residues include A40, G103, and H151. G214 lines the AMP pocket. Position 215 (D215) interacts with (6S)-NADPHX.

This sequence belongs to the NnrD/CARKD family. Homotetramer. Requires Mg(2+) as cofactor.

The catalysed reaction is (6S)-NADHX + ADP = AMP + phosphate + NADH + H(+). The enzyme catalyses (6S)-NADPHX + ADP = AMP + phosphate + NADPH + H(+). Functionally, catalyzes the dehydration of the S-form of NAD(P)HX at the expense of ADP, which is converted to AMP. Together with NAD(P)HX epimerase, which catalyzes the epimerization of the S- and R-forms, the enzyme allows the repair of both epimers of NAD(P)HX, a damaged form of NAD(P)H that is a result of enzymatic or heat-dependent hydration. This is ADP-dependent (S)-NAD(P)H-hydrate dehydratase from Lactococcus lactis subsp. lactis (strain IL1403) (Streptococcus lactis).